The chain runs to 374 residues: UPF0754 membrane protein NWMN_1738 (374 aa).

2 helical membrane-spanning segments follow: residues 4-24 (LFIIIFMIVVGAIIGGITNVI) and 354-374 (SLGFILGGIIGFFQGLVAIFV).

Belongs to the UPF0754 family.

It is found in the cell membrane. The chain is UPF0754 membrane protein NWMN_1738 from Staphylococcus aureus (strain Newman).